The following is a 147-amino-acid chain: Protein phosphatase 1 regulatory subunit 14A (147 aa).

Residues methionine 1 to leucine 11 show a composition bias toward basic residues. A disordered region spans residues methionine 1 to valine 37. Serine 26 carries the phosphoserine modification. Residues alanine 35 to lysine 120 are inhibitory. Threonine 38 is modified (phosphothreonine). The tract at residues leucine 118 to proline 147 is disordered. Polar residues predominate over residues proline 127–proline 137. Residues serine 128, serine 134, and serine 136 each carry the phosphoserine modification. Residues arginine 138 to proline 147 show a composition bias toward basic and acidic residues.

The protein belongs to the PP1 inhibitor family. In terms of processing, phosphorylation of Thr-38 induces a conformation change. As to expression, detected in aorta smooth muscle and bladder.

The protein localises to the cytoplasm. Its function is as follows. Inhibitor of PPP1CA. Has over 1000-fold higher inhibitory activity when phosphorylated, creating a molecular switch for regulating the phosphorylation status of PPP1CA substrates and smooth muscle contraction. The polypeptide is Protein phosphatase 1 regulatory subunit 14A (CPI17) (Sus scrofa (Pig)).